Reading from the N-terminus, the 267-residue chain is Small ribosomal subunit protein eS4 (267 aa).

In terms of domain architecture, S4 RNA-binding spans Leu-42–Asp-104.

This sequence belongs to the eukaryotic ribosomal protein eS4 family.

It localises to the cytoplasm. This is Small ribosomal subunit protein eS4 (rps4) from Dictyostelium discoideum (Social amoeba).